The primary structure comprises 127 residues: MRHQKSGRKFNRTSAHREAMFRNMAASLFKHELIKTTLPKAKELRRVAEPLITIGKVDGVANRRLAFARLRDKEAVGKLFVELGPRYATRPGGYLRILKAGFRAGDNAPMAYVELVDRPVVAEEVAE.

The protein belongs to the bacterial ribosomal protein bL17 family. In terms of assembly, part of the 50S ribosomal subunit. Contacts protein L32.

The protein is Large ribosomal subunit protein bL17 of Xanthomonas axonopodis pv. citri (strain 306).